Consider the following 275-residue polypeptide: Tryptophan synthase alpha chain (275 aa).

Catalysis depends on proton acceptor residues Glu-58 and Asp-69.

This sequence belongs to the TrpA family. In terms of assembly, tetramer of two alpha and two beta chains. Ubiquitously expressed at low levels in seedlings, roots, hypocotyls, cotyledons, stems, leaves, inflorescences, flowers, siliques and seeds.

The protein localises to the cytoplasm. It catalyses the reaction (1S,2R)-1-C-(indol-3-yl)glycerol 3-phosphate + L-serine = D-glyceraldehyde 3-phosphate + L-tryptophan + H2O. The catalysed reaction is (1S,2R)-1-C-(indol-3-yl)glycerol 3-phosphate = indole + D-glyceraldehyde 3-phosphate. It functions in the pathway amino-acid biosynthesis; L-tryptophan biosynthesis; L-tryptophan from chorismate: step 5/5. Functionally, the alpha subunit is responsible for the aldol cleavage of indoleglycerol phosphate to indole and glyceraldehyde 3-phosphate. Contributes to the tryptophan-independent indole biosynthesis, and possibly to auxin production. The polypeptide is Tryptophan synthase alpha chain (TRPA1) (Arabidopsis thaliana (Mouse-ear cress)).